The chain runs to 88 residues: Small ribosomal subunit protein bS21 (88 aa).

Residues alanine 58 to arginine 88 form a disordered region. A compositionally biased stretch (low complexity) spans arginine 73–arginine 88.

It belongs to the bacterial ribosomal protein bS21 family.

This Mesorhizobium japonicum (strain LMG 29417 / CECT 9101 / MAFF 303099) (Mesorhizobium loti (strain MAFF 303099)) protein is Small ribosomal subunit protein bS21.